The chain runs to 74 residues: Acyl carrier protein (74 aa).

The region spanning Met1–Ser74 is the Carrier domain. Ser34 carries the O-(pantetheine 4'-phosphoryl)serine modification.

It belongs to the acyl carrier protein (ACP) family. In terms of processing, 4'-phosphopantetheine is transferred from CoA to a specific serine of apo-ACP by AcpS. This modification is essential for activity because fatty acids are bound in thioester linkage to the sulfhydryl of the prosthetic group.

It is found in the cytoplasm. It participates in lipid metabolism; fatty acid biosynthesis. Its function is as follows. Carrier of the growing fatty acid chain in fatty acid biosynthesis. The sequence is that of Acyl carrier protein from Acetivibrio thermocellus (strain ATCC 27405 / DSM 1237 / JCM 9322 / NBRC 103400 / NCIMB 10682 / NRRL B-4536 / VPI 7372) (Clostridium thermocellum).